The primary structure comprises 568 residues: 2-succinyl-5-enolpyruvyl-6-hydroxy-3-cyclohexene-1-carboxylate synthase (568 aa).

The protein belongs to the TPP enzyme family. MenD subfamily. In terms of assembly, homodimer. Mg(2+) is required as a cofactor. It depends on Mn(2+) as a cofactor. The cofactor is thiamine diphosphate.

It catalyses the reaction isochorismate + 2-oxoglutarate + H(+) = 5-enolpyruvoyl-6-hydroxy-2-succinyl-cyclohex-3-ene-1-carboxylate + CO2. The protein operates within quinol/quinone metabolism; 1,4-dihydroxy-2-naphthoate biosynthesis; 1,4-dihydroxy-2-naphthoate from chorismate: step 2/7. Its pathway is quinol/quinone metabolism; menaquinone biosynthesis. Its function is as follows. Catalyzes the thiamine diphosphate-dependent decarboxylation of 2-oxoglutarate and the subsequent addition of the resulting succinic semialdehyde-thiamine pyrophosphate anion to isochorismate to yield 2-succinyl-5-enolpyruvyl-6-hydroxy-3-cyclohexene-1-carboxylate (SEPHCHC). This is 2-succinyl-5-enolpyruvyl-6-hydroxy-3-cyclohexene-1-carboxylate synthase from Haemophilus influenzae (strain PittGG).